Here is a 157-residue protein sequence, read N- to C-terminus: Small ribosomal subunit protein uS7 (157 aa).

This sequence belongs to the universal ribosomal protein uS7 family. Part of the 30S ribosomal subunit. Contacts proteins S9 and S11.

One of the primary rRNA binding proteins, it binds directly to 16S rRNA where it nucleates assembly of the head domain of the 30S subunit. Is located at the subunit interface close to the decoding center, probably blocks exit of the E-site tRNA. The protein is Small ribosomal subunit protein uS7 of Rhodopirellula baltica (strain DSM 10527 / NCIMB 13988 / SH1).